Reading from the N-terminus, the 243-residue chain is 1-(5-phosphoribosyl)-5-[(5-phosphoribosylamino)methylideneamino] imidazole-4-carboxamide isomerase (243 aa).

The active-site Proton acceptor is the D14. D135 acts as the Proton donor in catalysis.

Belongs to the HisA/HisF family.

The protein localises to the cytoplasm. The catalysed reaction is 1-(5-phospho-beta-D-ribosyl)-5-[(5-phospho-beta-D-ribosylamino)methylideneamino]imidazole-4-carboxamide = 5-[(5-phospho-1-deoxy-D-ribulos-1-ylimino)methylamino]-1-(5-phospho-beta-D-ribosyl)imidazole-4-carboxamide. Its pathway is amino-acid biosynthesis; L-histidine biosynthesis; L-histidine from 5-phospho-alpha-D-ribose 1-diphosphate: step 4/9. This Rubrobacter xylanophilus (strain DSM 9941 / JCM 11954 / NBRC 16129 / PRD-1) protein is 1-(5-phosphoribosyl)-5-[(5-phosphoribosylamino)methylideneamino] imidazole-4-carboxamide isomerase.